The chain runs to 237 residues: MIKRSAVVLMAVILTGCGNKTLEEVGNAPAMSPVGSGLRYNQAPQLASYPKQTKAVSNGYSLWNDSQAALFKDSRAINVGDLLTVNISIADKAKFKNDTSRSRKNSTSLTWSTVINLFGITPPDSSGDMSTDSNSSSDGKGSVDRSETLTLMVAAVVTSILENGNLLISGSQEVRVNHEVRILNVAGIVRPQDVDAKNTISYEKIAEARISYGGKGRLTEVQQPPVGQQVVDMFSPF.

The N-terminal stretch at 1-16 is a signal peptide; that stretch reads MIKRSAVVLMAVILTG. Cys17 carries N-palmitoyl cysteine lipidation. Cys17 is lipidated: S-diacylglycerol cysteine. A disordered region spans residues 122-143; that stretch reads PPDSSGDMSTDSNSSSDGKGSV. A compositionally biased stretch (low complexity) spans 124-140; it reads DSSGDMSTDSNSSSDGK.

This sequence belongs to the FlgH family. The basal body constitutes a major portion of the flagellar organelle and consists of four rings (L,P,S, and M) mounted on a central rod.

It is found in the cell outer membrane. The protein localises to the bacterial flagellum basal body. Its function is as follows. Assembles around the rod to form the L-ring and probably protects the motor/basal body from shearing forces during rotation. The sequence is that of Flagellar L-ring protein from Allorhizobium ampelinum (strain ATCC BAA-846 / DSM 112012 / S4) (Agrobacterium vitis (strain S4)).